The chain runs to 409 residues: ORC1-type DNA replication protein 1 (409 aa).

ATP contacts are provided by residues Thr-63–Ala-67, Tyr-206, and Arg-218.

This sequence belongs to the CDC6/cdc18 family.

In terms of biological role, involved in regulation of DNA replication. This Archaeoglobus fulgidus (strain ATCC 49558 / DSM 4304 / JCM 9628 / NBRC 100126 / VC-16) protein is ORC1-type DNA replication protein 1 (cdc6-1).